Reading from the N-terminus, the 342-residue chain is S-adenosylmethionine:tRNA ribosyltransferase-isomerase (342 aa).

It belongs to the QueA family. Monomer.

It is found in the cytoplasm. It carries out the reaction 7-aminomethyl-7-carbaguanosine(34) in tRNA + S-adenosyl-L-methionine = epoxyqueuosine(34) in tRNA + adenine + L-methionine + 2 H(+). Its pathway is tRNA modification; tRNA-queuosine biosynthesis. Transfers and isomerizes the ribose moiety from AdoMet to the 7-aminomethyl group of 7-deazaguanine (preQ1-tRNA) to give epoxyqueuosine (oQ-tRNA). The sequence is that of S-adenosylmethionine:tRNA ribosyltransferase-isomerase from Campylobacter jejuni subsp. jejuni serotype O:23/36 (strain 81-176).